A 130-amino-acid polypeptide reads, in one-letter code: Small ribosomal subunit protein uS11c (130 aa).

This sequence belongs to the universal ribosomal protein uS11 family. Part of the 30S ribosomal subunit.

It is found in the plastid. Its subcellular location is the chloroplast. The chain is Small ribosomal subunit protein uS11c from Chara vulgaris (Common stonewort).